Here is a 554-residue protein sequence, read N- to C-terminus: Chaperonin GroEL (554 aa).

ATP is bound by residues 29-32 (TLGP), K50, 86-90 (DGTTT), G414, and D495.

It belongs to the chaperonin (HSP60) family. As to quaternary structure, forms a cylinder of 14 subunits composed of two heptameric rings stacked back-to-back. Interacts with the co-chaperonin GroES.

Its subcellular location is the cytoplasm. The catalysed reaction is ATP + H2O + a folded polypeptide = ADP + phosphate + an unfolded polypeptide.. Functionally, together with its co-chaperonin GroES, plays an essential role in assisting protein folding. The GroEL-GroES system forms a nano-cage that allows encapsulation of the non-native substrate proteins and provides a physical environment optimized to promote and accelerate protein folding. This Pelagibacter ubique (strain HTCC1062) protein is Chaperonin GroEL.